We begin with the raw amino-acid sequence, 257 residues long: Acetylglutamate kinase (257 aa).

Substrate contacts are provided by residues 43–44, R65, and N157; that span reads GG.

It belongs to the acetylglutamate kinase family. ArgB subfamily.

Its subcellular location is the cytoplasm. The enzyme catalyses N-acetyl-L-glutamate + ATP = N-acetyl-L-glutamyl 5-phosphate + ADP. It functions in the pathway amino-acid biosynthesis; L-arginine biosynthesis; N(2)-acetyl-L-ornithine from L-glutamate: step 2/4. In terms of biological role, catalyzes the ATP-dependent phosphorylation of N-acetyl-L-glutamate. This is Acetylglutamate kinase from Actinobacillus succinogenes (strain ATCC 55618 / DSM 22257 / CCUG 43843 / 130Z).